The chain runs to 465 residues: Argininosuccinate lyase (465 aa).

Belongs to the lyase 1 family. Argininosuccinate lyase subfamily.

It localises to the cytoplasm. The catalysed reaction is 2-(N(omega)-L-arginino)succinate = fumarate + L-arginine. It functions in the pathway amino-acid biosynthesis; L-arginine biosynthesis; L-arginine from L-ornithine and carbamoyl phosphate: step 3/3. The protein is Argininosuccinate lyase of Deinococcus geothermalis (strain DSM 11300 / CIP 105573 / AG-3a).